We begin with the raw amino-acid sequence, 199 residues long: Holliday junction resolvase RecU (199 aa).

Residues Thr82, Asp84, Glu97, and Gln116 each coordinate Mg(2+).

This sequence belongs to the RecU family. Requires Mg(2+) as cofactor.

Its subcellular location is the cytoplasm. The enzyme catalyses Endonucleolytic cleavage at a junction such as a reciprocal single-stranded crossover between two homologous DNA duplexes (Holliday junction).. Its function is as follows. Endonuclease that resolves Holliday junction intermediates in genetic recombination. Cleaves mobile four-strand junctions by introducing symmetrical nicks in paired strands. Promotes annealing of linear ssDNA with homologous dsDNA. Required for DNA repair, homologous recombination and chromosome segregation. The polypeptide is Holliday junction resolvase RecU (Streptococcus pyogenes serotype M1).